Consider the following 1782-residue polypeptide: AF4/FMR2 family member lilli (1782 aa).

14 disordered regions span residues 42–84 (NMED…PSEG), 150–313 (ASSS…PPPE), 434–515 (MPTP…QQQQ), 605–637 (GGSS…NLSR), 691–732 (EKLH…QQRY), 768–820 (GALP…LQIP), 839–891 (KVQP…SNKK), 911–1064 (VAAA…AAAS), 1091–1126 (AGNS…QHKQ), 1166–1234 (LPQS…KQGQ), 1296–1327 (ARQH…TPKD), 1386–1420 (LKQE…EQLS), 1450–1484 (QESA…QQQQ), and 1674–1701 (GNTP…GKIV). Over residues 54–80 (REKYERQQGIQSDDRETSLFGEPRRLN) the composition is skewed to basic and acidic residues. 2 stretches are compositionally biased toward low complexity: residues 164-180 (QQQQ…QQQQ) and 211-260 (PSSS…MSSP). The segment covering 435-447 (PTPPKASPTPPAI) has biased composition (pro residues). Phosphothreonine is present on threonine 443. Positions 450-463 (MKTEKNHSLEKQDS) are enriched in basic and acidic residues. A compositionally biased stretch (acidic residues) spans 465 to 475 (LENDLELSESD). Phosphoserine is present on residues serine 472 and serine 474. 2 stretches are compositionally biased toward low complexity: residues 484-515 (SAGN…QQQQ) and 609-622 (GSCM…SSSN). Over residues 623–634 (KTPSPTDSNRWN) the composition is skewed to polar residues. The segment covering 691–701 (EKLHDEPRHVG) has biased composition (basic and acidic residues). Composition is skewed to low complexity over residues 714–730 (QQQQ…QQQQ) and 782–805 (SDSG…GGSS). Residues 859–869 (PRQKKPRKKKM) are compositionally biased toward basic residues. Phosphoserine occurs at positions 878 and 879. The segment at residues 920–932 (KKGRGRPRKQAQQ) is a DNA-binding region (a.T hook). Over residues 929–972 (QAQQQQQQQQQQLQQSGNLSSASASSSQAKGPTLTAAKKPLAKA) the composition is skewed to low complexity. Residues serine 949 and serine 951 each carry the phosphoserine modification. Over residues 973–982 (SVSNSNSTAP) the composition is skewed to polar residues. Low complexity-rich tracts occupy residues 996 to 1018 (SNSS…TMAA), 1033 to 1064 (SSSS…AAAS), 1105 to 1116 (SVGSSSNSSSSS), and 1174 to 1196 (SSSD…SSSS). The span at 1308–1318 (AQQNGHLSSRS) shows a compositional bias: polar residues. The segment covering 1450 to 1460 (QESAANGSPNK) has biased composition (polar residues). Serine 1457 carries the phosphoserine modification. Composition is skewed to low complexity over residues 1461 to 1484 (LQQQ…QQQQ) and 1674 to 1694 (GNTP…SGSN).

This sequence belongs to the AF4 family.

It localises to the nucleus. Functionally, has a role in transcriptional regulation. Acts in parallel with the Ras/MAPK and the PI3K/PKB pathways in the control of cell identity and cellular growth. Essential for regulation of the cytoskeleton and cell growth but not for cell proliferation or growth rate. Required specifically for the microtubule-based basal transport of lipid droplets. Plays a partially redundant function downstream of Raf in cell fate specification in the developing eye. Pair-rule protein that regulates embryonic cellularization, gastrulation and segmentation. This is AF4/FMR2 family member lilli from Drosophila mojavensis (Fruit fly).